Reading from the N-terminus, the 792-residue chain is MKFSENWLRNHAPIQANRDVLVATLTAIGLEVENVAVLGEALDLILVARIVNVVPHPESDLLQICQVDVAQDTLLQIVCGASNVRPGLVVPLALLGAKIGALTIKSTTLRGIESNGMLCSAKELGLDTEASGLMELPEDAPIGTPLADYLALPDASIEIKLTPNRADCFSVRGIAFDVAAACASEVTPFHIDEIPAVSARTLPVELHAGANAPRYCGCVIEGIDPAAPTPVWMAERLRRSGIRPVSLLVDITQYVMLELGQPMHAFDVDTLRGPIGVRLSRNDEALKLLDGRTVVLDNDFLVVTDADQPIALAGLIGGWETRITDTTINVFLEAAHFAPAAIMGRGRKLGLHTDASHRFERGVDPALPPQAIAFATRLILELAGGKPGSLIHVQLPEYLPAPASILLRRTRIARLLGIVIDDAEVERILQALGMQVTTQAEGWRVVAPSRRFDIAIEEDLIEELVRIRGYEHLPTALPVGASHIAMPSETRLDMTSVRRQLIARELQETINYAFIDAELLRRWQLNTGQVMLMNPLSAELAVMRPRLLPGLVAALGRNIARQLERVRLFELGNVFTASDEAGAAPLETRHVAAAVCGDAFALQWGEQVRKVDFYDLKGDLESLAAASGAVLTFHSSAQPWGHPGRSADVWCDDMCIGWIGQLHPALTQTLEINVDVIAFELALEPLVRRALPRAHALSRFPFVRRDLACVVPEHVTWSELAITVRDVIGPLLRDVKLFDRYVGKGIEPGFKSLAIGLILQDDTRTLIDRDVDDIMTKVVMAIQQRHDVRIRS.

Residues 39 to 147 enclose the tRNA-binding domain; it reads GEALDLILVA…EDAPIGTPLA (109 aa). In terms of domain architecture, B5 spans 400-475; sequence PAPASILLRR…RIRGYEHLPT (76 aa). Asp453, Asp459, Glu462, and Glu463 together coordinate Mg(2+). Positions 698 to 791 constitute an FDX-ACB domain; the sequence is SRFPFVRRDL…IQQRHDVRIR (94 aa).

It belongs to the phenylalanyl-tRNA synthetase beta subunit family. Type 1 subfamily. In terms of assembly, tetramer of two alpha and two beta subunits. Mg(2+) is required as a cofactor.

The protein localises to the cytoplasm. The catalysed reaction is tRNA(Phe) + L-phenylalanine + ATP = L-phenylalanyl-tRNA(Phe) + AMP + diphosphate + H(+). This Xylella fastidiosa (strain Temecula1 / ATCC 700964) protein is Phenylalanine--tRNA ligase beta subunit.